The following is a 320-amino-acid chain: MSTITAADVNKLRQSTGAGMMDCKKALVEAEGDFDKAIQILREKGQKVAANRSDRESSEGAAVSFINADNTKGAIITLNCETDFVGKNEAFVTLAKDLVERAINFSNKEEFLASDFNGITVAEKLIEQTGVIGEKIEIGGFEILEGAFVGSYVHVNKIAALTAISAPIANAETLTKDVSMQVASMGADTLSYKDFDPAFVESELAARIAVIEKDNEEAKRLGKTLKNVPKYISFSQLTPEVIKQAEEDAKAELKAEGKPEQIWDKILPGKVQRFISDNTTLDQEKALLDQNFIKDDSKKVGDYVKGFNVEITGFKRVTLG.

The interval 82–85 (TDFV) is involved in Mg(2+) ion dislocation from EF-Tu.

Belongs to the EF-Ts family.

The protein resides in the cytoplasm. In terms of biological role, associates with the EF-Tu.GDP complex and induces the exchange of GDP to GTP. It remains bound to the aminoacyl-tRNA.EF-Tu.GTP complex up to the GTP hydrolysis stage on the ribosome. The polypeptide is Elongation factor Ts (Flavobacterium johnsoniae (strain ATCC 17061 / DSM 2064 / JCM 8514 / BCRC 14874 / CCUG 350202 / NBRC 14942 / NCIMB 11054 / UW101) (Cytophaga johnsonae)).